We begin with the raw amino-acid sequence, 637 residues long: Probable potassium transport system protein Kup 2 (637 aa).

The tract at residues 1–21 (MDLASRDSEAETVEQSSHSGA) is disordered. The next 12 helical transmembrane spans lie at 29 to 49 (LMLG…IYAF), 68 to 88 (VLSL…VAFV), 116 to 136 (LILA…IITP), 150 to 170 (VTPT…AILF), 180 to 200 (VAAV…VAGL), 228 to 248 (AAFV…ALYV), 258 to 278 (IVLA…FGQG), 300 to 320 (ALMP…QAVI), 359 to 379 (LLVA…SSLA), 381 to 401 (AYGI…FVVM), 409 to 429 (LAVA…FFLA), and 434 to 454 (IFEG…IMWT).

It belongs to the HAK/KUP transporter (TC 2.A.72) family.

It localises to the cell inner membrane. The catalysed reaction is K(+)(in) + H(+)(in) = K(+)(out) + H(+)(out). Functionally, transport of potassium into the cell. Likely operates as a K(+):H(+) symporter. The protein is Probable potassium transport system protein Kup 2 of Mesorhizobium japonicum (strain LMG 29417 / CECT 9101 / MAFF 303099) (Mesorhizobium loti (strain MAFF 303099)).